Here is a 197-residue protein sequence, read N- to C-terminus: Small ribosomal subunit protein uS7 (197 aa).

Belongs to the universal ribosomal protein uS7 family. In terms of assembly, part of the 30S ribosomal subunit.

In terms of biological role, one of the primary rRNA binding proteins, it binds directly to 16S rRNA where it nucleates assembly of the head domain of the 30S subunit. Is located at the subunit interface close to the decoding center. The protein is Small ribosomal subunit protein uS7 of Methanopyrus kandleri (strain AV19 / DSM 6324 / JCM 9639 / NBRC 100938).